Consider the following 192-residue polypeptide: Thiol-disulfide oxidoreductase ResA (192 aa).

The helical; Signal-anchor for type II membrane protein transmembrane segment at 22-41 threads the bilayer; sequence SSILLILVAAVVFAIVSNMK. The Thioredoxin domain occupies 47–189; the sequence is YRVGDAAPDF…LEGYLNDIAP (143 aa). A disulfide bridge connects residues cysteine 89 and cysteine 92.

It belongs to the thioredoxin family. ResA subfamily.

The protein localises to the cell membrane. Its pathway is protein modification; cytochrome c assembly. Its function is as follows. Thiol-disulfide oxidoreductase which is required in disulfide reduction during c-type cytochrome synthesis. May accept reducing equivalents from CcdA, leading to breakage of disulfide bonds in apocytochrome c; following this reduction heme can be covalently attached. The chain is Thiol-disulfide oxidoreductase ResA from Oceanobacillus iheyensis (strain DSM 14371 / CIP 107618 / JCM 11309 / KCTC 3954 / HTE831).